A 152-amino-acid polypeptide reads, in one-letter code: Ubiquitin-conjugating enzyme E2 A (152 aa).

A UBC core domain is found at 4–150 (PARRRLMRDF…VSAIVEQSWR (147 aa)). The active-site Glycyl thioester intermediate is Cys-88. A Phosphoserine; by CDK9 modification is found at Ser-120.

The protein belongs to the ubiquitin-conjugating enzyme family. Interacts with RAD18 and WAC. Interacts with RFPL4A and CCNB1. Post-translationally, phosphorylation at Ser-120 by CDK9 increases activity towards histone H2B.

It is found in the late endosome. The protein resides in the lysosome. It carries out the reaction S-ubiquitinyl-[E1 ubiquitin-activating enzyme]-L-cysteine + [E2 ubiquitin-conjugating enzyme]-L-cysteine = [E1 ubiquitin-activating enzyme]-L-cysteine + S-ubiquitinyl-[E2 ubiquitin-conjugating enzyme]-L-cysteine.. The protein operates within protein modification; protein ubiquitination. E2 ubiquitin-conjugating enzyme that accepts ubiquitin from the ubiquitin-activating enzyme E1 and transfers it to a E3 ubiquitin-protein ligase. In vitro catalyzes 'Lys-11', as well as 'Lys-48'-linked polyubiquitination. Together with the E3 enzyme BRE1 (RNF20 and/or RNF40), plays a role in transcription regulation by catalyzing the monoubiquitination of histone H2B at 'Lys-120' to form H2BK120ub1. H2BK120ub1 gives a specific tag for epigenetic transcriptional activation, elongation by RNA polymerase II, telomeric silencing, and is also a prerequisite for H3K4me and H3K79me formation. Involved in mitophagy by acting as a E2 ubiquitin-conjugating enzyme for PRKN. In association with the E3 enzyme UBR4, is involved in N-end rule-dependent protein degradation. In association with the E3 ubiquitin-protein ligase complex SIFI, inhibits the mitochondrial stress response by acting as a E2 ubiquitin-conjugating enzyme for UBR4 and KCMF1. This is Ubiquitin-conjugating enzyme E2 A from Homo sapiens (Human).